Here is a 582-residue protein sequence, read N- to C-terminus: ATP-dependent lipid A-core flippase (582 aa).

A run of 5 helical transmembrane segments spans residues 25-45 (WFML…QAGA), 64-84 (VLIV…GQFM), 142-162 (AIIV…FLLW), 165-185 (WKLT…MNIT), and 253-273 (VIVQ…YIHL). Residues 29–309 (VISVIGYALY…LTDVNVKVQR (281 aa)) form the ABC transmembrane type-1 domain. The region spanning 342 to 577 (IDFEGVSFGY…NGLYTQMYRM (236 aa)) is the ABC transporter domain. 375–382 (GRSGAGKS) serves as a coordination point for ATP.

Belongs to the ABC transporter superfamily. Lipid exporter (TC 3.A.1.106) family. In terms of assembly, homodimer.

It is found in the cell inner membrane. It carries out the reaction ATP + H2O + lipid A-core oligosaccharideSide 1 = ADP + phosphate + lipid A-core oligosaccharideSide 2.. In terms of biological role, involved in lipopolysaccharide (LPS) biosynthesis. Translocates lipid A-core from the inner to the outer leaflet of the inner membrane. Transmembrane domains (TMD) form a pore in the inner membrane and the ATP-binding domain (NBD) is responsible for energy generation. In Alcanivorax borkumensis (strain ATCC 700651 / DSM 11573 / NCIMB 13689 / SK2), this protein is ATP-dependent lipid A-core flippase.